Consider the following 329-residue polypeptide: Phosphate acyltransferase (329 aa).

Belongs to the PlsX family. As to quaternary structure, homodimer. Probably interacts with PlsY.

The protein resides in the cytoplasm. It catalyses the reaction a fatty acyl-[ACP] + phosphate = an acyl phosphate + holo-[ACP]. It functions in the pathway lipid metabolism; phospholipid metabolism. Its function is as follows. Catalyzes the reversible formation of acyl-phosphate (acyl-PO(4)) from acyl-[acyl-carrier-protein] (acyl-ACP). This enzyme utilizes acyl-ACP as fatty acyl donor, but not acyl-CoA. This Geobacillus sp. (strain WCH70) protein is Phosphate acyltransferase.